The primary structure comprises 93 residues: Protein LSO1 (93 aa).

The disordered stretch occupies residues 1–73 (MHNTGKRYSE…TEKLRAKKER (73 aa)). Residues 20 to 83 (ARKRRQAYEK…DQLLAAEEEA (64 aa)) adopt a coiled-coil conformation. Basic and acidic residues-rich tracts occupy residues 25-49 (QAYEKDQLEKQQLEAQEAQRWEEGA) and 57-73 (LIMEQKKTEKLRAKKER).

It is found in the nucleus. Its subcellular location is the cytoplasm. Its function is as follows. Likely to play a role in iron homeostasis. The chain is Protein LSO1 from Saccharomyces cerevisiae (strain ATCC 204508 / S288c) (Baker's yeast).